A 218-amino-acid chain; its full sequence is 3-dehydroquinate dehydratase (218 aa).

3-dehydroquinate contacts are provided by residues 29-31 (EFR) and Arg-56. Residue His-116 is the Proton donor/acceptor of the active site. Catalysis depends on Lys-142, which acts as the Schiff-base intermediate with substrate. Positions 180, 200, and 204 each coordinate 3-dehydroquinate.

The protein belongs to the type-I 3-dehydroquinase family. Homodimer.

The catalysed reaction is 3-dehydroquinate = 3-dehydroshikimate + H2O. It participates in metabolic intermediate biosynthesis; chorismate biosynthesis; chorismate from D-erythrose 4-phosphate and phosphoenolpyruvate: step 3/7. Its function is as follows. Involved in the third step of the chorismate pathway, which leads to the biosynthesis of aromatic amino acids. Catalyzes the cis-dehydration of 3-dehydroquinate (DHQ) and introduces the first double bond of the aromatic ring to yield 3-dehydroshikimate. The chain is 3-dehydroquinate dehydratase from Methanococcus maripaludis (strain C6 / ATCC BAA-1332).